Consider the following 273-residue polypeptide: MALKNFNPITPSLRELVQVDKTSLWKGRPLKSLTKGISKTGGRNNQGRITSWHRGGGHKKLYRIIDFKRNKIDISAIVERIEYDPNRTAFIALIKYEDGEYSYILAPQKLSVGNRVISSQDADIKIGNCLPLKCIPIGTTLHNVEMQVGKGGQIARSAGTSVDLVGKDSGYAQIKLRSGEFRLVPLDCKATIGSISNPDQKNINLGKAGRNRWLGWRPHVRGVAMNPVDHPHGGGEGKTSGGRHPVTPWGFPTKGKKTRKNKRTSKFIVKKRK.

Residues 228–273 (VDHPHGGGEGKTSGGRHPVTPWGFPTKGKKTRKNKRTSKFIVKKRK) are disordered. Over residues 254-273 (KGKKTRKNKRTSKFIVKKRK) the composition is skewed to basic residues.

The protein belongs to the universal ribosomal protein uL2 family. Part of the 50S ribosomal subunit. Forms a bridge to the 30S subunit in the 70S ribosome.

In terms of biological role, one of the primary rRNA binding proteins. Required for association of the 30S and 50S subunits to form the 70S ribosome, for tRNA binding and peptide bond formation. It has been suggested to have peptidyltransferase activity; this is somewhat controversial. Makes several contacts with the 16S rRNA in the 70S ribosome. The chain is Large ribosomal subunit protein uL2 from Rickettsia massiliae (strain Mtu5).